An 833-amino-acid polypeptide reads, in one-letter code: Glycerol-3-phosphate acyltransferase (833 aa).

An HXXXXD motif motif is present at residues 310 to 315 (HRSHID).

This sequence belongs to the GPAT/DAPAT family.

The protein resides in the cell inner membrane. It carries out the reaction sn-glycerol 3-phosphate + an acyl-CoA = a 1-acyl-sn-glycero-3-phosphate + CoA. It participates in phospholipid metabolism; CDP-diacylglycerol biosynthesis; CDP-diacylglycerol from sn-glycerol 3-phosphate: step 1/3. The polypeptide is Glycerol-3-phosphate acyltransferase (Pseudomonas syringae pv. tomato (strain ATCC BAA-871 / DC3000)).